The primary structure comprises 496 residues: Cytochrome c-552 (496 aa).

A signal peptide spans 1–23 (MKKYKFLFAISIIAIGLMTVLLA). Residue H100 participates in heme c binding. 3 residues coordinate heme: C128, C131, and K132. Positions 166, 169, 170, 210, 213, and 214 each coordinate heme c. Residues E216, Y217, K269, and Q271 each coordinate Ca(2+). Y217 is a substrate binding site. Residue H272 coordinates substrate. Positions 283, 290, 293, 294, 308, 321, 324, 325, and 400 each coordinate heme c.

Belongs to the cytochrome c-552 family. The cofactor is Ca(2+). Heme c is required as a cofactor.

It is found in the periplasm. It catalyses the reaction 6 Fe(III)-[cytochrome c] + NH4(+) + 2 H2O = 6 Fe(II)-[cytochrome c] + nitrite + 8 H(+). It participates in nitrogen metabolism; nitrate reduction (assimilation). Its function is as follows. Catalyzes the reduction of nitrite to ammonia, consuming six electrons in the process. The chain is Cytochrome c-552 from Aliarcobacter butzleri (strain RM4018) (Arcobacter butzleri).